A 552-amino-acid polypeptide reads, in one-letter code: Hyaluronan synthase 2 (552 aa).

The Cytoplasmic segment spans residues 1–11 (MHCERFLCILR). Residues 12–32 (IIGTTLFGVSLLLGITAAYIV) form a helical membrane-spanning segment. Over 33 to 45 (GYQFIQTDNYYFS) the chain is Extracellular. Residues 46–66 (FGLYGAFLASHLIIQSLFAFL) form a helical membrane-spanning segment. The Cytoplasmic segment spans residues 67–374 (EHRKMKKSLE…NAMWFHKHHL (308 aa)). Thr110 carries the post-translational modification Phosphothreonine. Lys190 participates in a covalent cross-link: Glycyl lysine isopeptide (Lys-Gly) (interchain with G-Cter in ubiquitin). O-linked (GlcNAc) serine glycosylation occurs at Ser221. Phosphothreonine is present on Thr328. A helical transmembrane segment spans residues 375–395 (WMTYEAVITGFFPFFLIATVI). Residues 396–402 (QLFYRGK) are Extracellular-facing. The chain crosses the membrane as a helical span at residues 403–423 (IWNTLLFLLTVQLVGLIKSSF). Residues 424 to 429 (ASCLRG) lie on the Cytoplasmic side of the membrane. Residues 430 to 450 (NIVMVFMSLYSVLYMSSLLPA) form a helical membrane-spanning segment. The Extracellular segment spans residues 451 to 475 (KMFAIATINKAGWGTSGRKTIVVNF). A helical transmembrane segment spans residues 476-496 (IGLIPVSVWFTILLGGVIFTI). Residues 497-510 (YKESKKPFSESKQT) lie on the Cytoplasmic side of the membrane. Residues 511-531 (VLIVGTLLYACYWVMLLTLYV) form a helical membrane-spanning segment. Residues 532–552 (VLINKCGRRKKGQQYDMVLDV) lie on the Extracellular side of the membrane.

It belongs to the NodC/HAS family. In terms of assembly, homodimer; dimerization promotes enzymatic activity. Forms heterodimer with HAS3. Forms heterodimer with HAS1. Mg(2+) serves as cofactor. Phosphorylation at Thr-328 is essential for hyaluronan synthase activity. In terms of processing, O-GlcNAcylation at Ser-221 increases the stability of HAS2 and plasma membrane localization. Post-translationally, ubiquitination at Lys-190; this ubiquitination is essential for hyaluronan synthase activity and homo- or hetero-oligomerization. Can also be poly-ubiquitinated. Deubiquitinated by USP17 and USP4. USP17 efficiently removes 'Lys-63'- and 'Lys-48'-linked polyubiquitin chains, whereas USP4 preferentially removes monoubiquitination and, partially, both 'Lys-63'- and 'Lys-48'-linked polyubiquitin chain. As to expression, expressed in corneal endothelial cells.

The protein resides in the cell membrane. Its subcellular location is the endoplasmic reticulum membrane. It is found in the vesicle. It localises to the golgi apparatus membrane. The protein localises to the lysosome. The enzyme catalyses [hyaluronan](n) + UDP-N-acetyl-alpha-D-glucosamine = N-acetyl-beta-D-glucosaminyl-(1-&gt;4)-[hyaluronan](n) + UDP + H(+). It catalyses the reaction N-acetyl-beta-D-glucosaminyl-(1-&gt;4)-[hyaluronan](n) + UDP-alpha-D-glucuronate = [hyaluronan](n+1) + UDP + H(+). Its pathway is glycan biosynthesis; hyaluronan biosynthesis. Its function is as follows. Catalyzes the addition of GlcNAc or GlcUA monosaccharides to the nascent hyaluronan polymer. Therefore, it is essential to hyaluronan synthesis a major component of most extracellular matrices that has a structural role in tissues architectures and regulates cell adhesion, migration and differentiation. This is one of three isoenzymes responsible for cellular hyaluronan synthesis and it is particularly responsible for the synthesis of high molecular mass hyaluronan. This Bos taurus (Bovine) protein is Hyaluronan synthase 2 (HAS2).